The sequence spans 328 residues: C-type lectin domain family 4 member K (328 aa).

The Cytoplasmic segment spans residues 1–43 (MTVEKEAPDAHFTVDKQNISLWPREPPPKSGPSLVPGKTPTVR). Residues 44 to 64 (AALICLTLVLVASVLLQAVLY) traverse the membrane as a helical; Signal-anchor for type II membrane protein segment. Over 65–328 (PRFMGTISDV…CKRPYVPSEP (264 aa)) the chain is Extracellular. N87, N113, and N180 each carry an N-linked (GlcNAc...) asparagine glycan. The stretch at 145-190 (EEVSTLNAQIPELKSDLEKASALNTKIRALQGSLENMSKLLKRQND) forms a coiled coil. Residues 202–320 (FKGNFYYFSL…CDKTFLFICK (119 aa)) enclose the C-type lectin domain. Disulfide bonds link C223/C319 and C295/C311.

As to quaternary structure, homotrimer. In terms of tissue distribution, exclusively expressed by Langerhans cells. Expressed in astrocytoma and malignant ependymoma, but not in normal brain tissues.

The protein resides in the membrane. In terms of biological role, calcium-dependent lectin displaying mannose-binding specificity. Induces the formation of Birbeck granules (BGs); is a potent regulator of membrane superimposition and zippering. Binds to sulfated as well as mannosylated glycans, keratan sulfate (KS) and beta-glucans. Facilitates uptake of antigens and is involved in the routing and/or processing of antigen for presentation to T cells. Major receptor on primary Langerhans cells for Candida species, Saccharomyces species, and Malassezia furfur. Protects against human immunodeficiency virus-1 (HIV-1) infection. Binds to high-mannose structures present on the envelope glycoprotein which is followed by subsequent targeting of the virus to the Birbeck granules leading to its rapid degradation. The chain is C-type lectin domain family 4 member K (CD207) from Homo sapiens (Human).